The sequence spans 285 residues: Pantothenate synthetase (285 aa).

30–37 (MGNLHDGH) contributes to the ATP binding site. Residue histidine 37 is the Proton donor of the active site. Glutamine 61 provides a ligand contact to (R)-pantoate. Glutamine 61 provides a ligand contact to beta-alanine. Residue 149-152 (GEKD) participates in ATP binding. Glutamine 155 lines the (R)-pantoate pocket. ATP-binding positions include isoleucine 178 and 186–189 (LSSR).

Belongs to the pantothenate synthetase family. As to quaternary structure, homodimer.

It is found in the cytoplasm. The catalysed reaction is (R)-pantoate + beta-alanine + ATP = (R)-pantothenate + AMP + diphosphate + H(+). The protein operates within cofactor biosynthesis; (R)-pantothenate biosynthesis; (R)-pantothenate from (R)-pantoate and beta-alanine: step 1/1. Catalyzes the condensation of pantoate with beta-alanine in an ATP-dependent reaction via a pantoyl-adenylate intermediate. The protein is Pantothenate synthetase of Buchnera aphidicola subsp. Acyrthosiphon pisum (strain Tuc7).